A 190-amino-acid chain; its full sequence is Translation initiation factor IF-3 (190 aa).

Belongs to the IF-3 family. In terms of assembly, monomer.

Its subcellular location is the cytoplasm. Functionally, IF-3 binds to the 30S ribosomal subunit and shifts the equilibrium between 70S ribosomes and their 50S and 30S subunits in favor of the free subunits, thus enhancing the availability of 30S subunits on which protein synthesis initiation begins. This chain is Translation initiation factor IF-3, found in Prochlorococcus marinus (strain MIT 9301).